Reading from the N-terminus, the 151-residue chain is 3-hydroxyacyl-[acyl-carrier-protein] dehydratase FabZ (151 aa).

Residue His49 is part of the active site.

It belongs to the thioester dehydratase family. FabZ subfamily.

The protein localises to the cytoplasm. The enzyme catalyses a (3R)-hydroxyacyl-[ACP] = a (2E)-enoyl-[ACP] + H2O. Its function is as follows. Involved in unsaturated fatty acids biosynthesis. Catalyzes the dehydration of short chain beta-hydroxyacyl-ACPs and long chain saturated and unsaturated beta-hydroxyacyl-ACPs. In Bordetella parapertussis (strain 12822 / ATCC BAA-587 / NCTC 13253), this protein is 3-hydroxyacyl-[acyl-carrier-protein] dehydratase FabZ.